We begin with the raw amino-acid sequence, 268 residues long: Putative carbamate hydrolase RutD (268 aa).

The 105-residue stretch at Pro-15–Ser-119 folds into the AB hydrolase-1 domain.

The protein belongs to the AB hydrolase superfamily. Hydrolase RutD family.

The enzyme catalyses carbamate + 2 H(+) = NH4(+) + CO2. In terms of biological role, involved in pyrimidine catabolism. May facilitate the hydrolysis of carbamate, a reaction that can also occur spontaneously. In Cronobacter sakazakii (strain ATCC BAA-894) (Enterobacter sakazakii), this protein is Putative carbamate hydrolase RutD.